Reading from the N-terminus, the 828-residue chain is Leucine--tRNA ligase (828 aa).

Positions 42–52 (PYPSGTLHVGH) match the 'HIGH' region motif. Residues 582-586 (KMSKS) carry the 'KMSKS' region motif. Lysine 585 is a binding site for ATP.

Belongs to the class-I aminoacyl-tRNA synthetase family.

The protein resides in the cytoplasm. The enzyme catalyses tRNA(Leu) + L-leucine + ATP = L-leucyl-tRNA(Leu) + AMP + diphosphate. This Petrotoga mobilis (strain DSM 10674 / SJ95) protein is Leucine--tRNA ligase.